Reading from the N-terminus, the 211-residue chain is Thymidylate kinase (211 aa).

10 to 17 (GGDGVGKS) is a binding site for ATP.

It belongs to the thymidylate kinase family.

The catalysed reaction is dTMP + ATP = dTDP + ADP. Phosphorylation of dTMP to form dTDP in both de novo and salvage pathways of dTTP synthesis. The protein is Thymidylate kinase of Clavibacter sepedonicus (Clavibacter michiganensis subsp. sepedonicus).